A 212-amino-acid polypeptide reads, in one-letter code: Thymidylate kinase (212 aa).

10-17 contacts ATP; the sequence is GPDGAGKT.

Belongs to the thymidylate kinase family.

The enzyme catalyses dTMP + ATP = dTDP + ADP. Functionally, phosphorylation of dTMP to form dTDP in both de novo and salvage pathways of dTTP synthesis. This chain is Thymidylate kinase, found in Enterococcus faecalis (strain ATCC 700802 / V583).